The primary structure comprises 308 residues: Cytochrome b (308 aa).

Transmembrane regions (helical) follow at residues 1–21 (FGLLLGICLIVQIVTGLLLAA), 45–66 (WLIRNLHANGASFFFICIYLHI), 81–101 (WNIGVILLLTLMATAFVGYVX), and 146–166 (FFALHFLLPFVFAGLTLVHLT). Heme b-binding residues include histidine 51 and histidine 65. Histidine 150 and histidine 164 together coordinate heme b. Histidine 169 contributes to the a ubiquinone binding site. The next 3 helical transmembrane spans lie at 194–214 (TKDVLGFVLMLIPLITLALFS), 256–276 (LGGVLALAASVLVLFLIPFLH), and 288–308 (LSQILFWTLVANLLMLTWVSN).

This sequence belongs to the cytochrome b family. As to quaternary structure, the cytochrome bc1 complex contains 11 subunits: 3 respiratory subunits (MT-CYB, CYC1 and UQCRFS1), 2 core proteins (UQCRC1 and UQCRC2) and 6 low-molecular weight proteins (UQCRH/QCR6, UQCRB/QCR7, UQCRQ/QCR8, UQCR10/QCR9, UQCR11/QCR10 and a cleavage product of UQCRFS1). This cytochrome bc1 complex then forms a dimer. Heme b serves as cofactor.

The protein localises to the mitochondrion inner membrane. Functionally, component of the ubiquinol-cytochrome c reductase complex (complex III or cytochrome b-c1 complex) that is part of the mitochondrial respiratory chain. The b-c1 complex mediates electron transfer from ubiquinol to cytochrome c. Contributes to the generation of a proton gradient across the mitochondrial membrane that is then used for ATP synthesis. The protein is Cytochrome b (MT-CYB) of Pomatostomus ruficeps (Chestnut-crowned babbler).